We begin with the raw amino-acid sequence, 221 residues long: Large ribosomal subunit protein uL4 (221 aa).

The tract at residues 46 to 74 is disordered; it reads AGTASTKTRSEVSGGGRKPWPQKHTGRAR.

This sequence belongs to the universal ribosomal protein uL4 family. As to quaternary structure, part of the 50S ribosomal subunit.

Functionally, one of the primary rRNA binding proteins, this protein initially binds near the 5'-end of the 23S rRNA. It is important during the early stages of 50S assembly. It makes multiple contacts with different domains of the 23S rRNA in the assembled 50S subunit and ribosome. In terms of biological role, forms part of the polypeptide exit tunnel. The polypeptide is Large ribosomal subunit protein uL4 (Petrotoga mobilis (strain DSM 10674 / SJ95)).